Consider the following 320-residue polypeptide: Ferrochelatase (320 aa).

Fe cation is bound by residues histidine 194 and glutamate 275.

This sequence belongs to the ferrochelatase family.

The protein resides in the cytoplasm. The enzyme catalyses heme b + 2 H(+) = protoporphyrin IX + Fe(2+). It functions in the pathway porphyrin-containing compound metabolism; protoheme biosynthesis; protoheme from protoporphyrin-IX: step 1/1. Its function is as follows. Catalyzes the ferrous insertion into protoporphyrin IX. The chain is Ferrochelatase from Klebsiella pneumoniae (strain 342).